A 327-amino-acid polypeptide reads, in one-letter code: Toluene-4-monooxygenase system, hydroxylase component subunit beta (327 aa).

It belongs to the TmoE/XamoE family. In terms of assembly, the alkene monooxygenase multicomponent enzyme system is composed of an electron transfer component and a monooxygenase component interacting with the effector protein TmoD. The electron transfer component is composed of a ferredoxin reductase (TmoF) and a ferredoxin (TmoC), and the monooxygenase component is formed by a heterohexamer (dimer of heterotrimers) of two alpha subunits (TmoA), two beta subunits (TmoE) and two gamma subunits (TmoB).

The catalysed reaction is toluene + NADH + O2 + H(+) = 4-methylphenol + NAD(+) + H2O. Its pathway is xenobiotic degradation; toluene degradation. With respect to regulation, inhibited by Zn(2+) and Cu(2+). Its function is as follows. Component of the toluene-4-monooxygenase multicomponent enzyme system which catalyzes the O2- and NADH-dependent hydroxylation of toluene to form p-cresol. Also able to convert benzene to phenol, catechol, and 1,2,3-trihydroxybenzene by successive hydroxylations. The polypeptide is Toluene-4-monooxygenase system, hydroxylase component subunit beta (Ectopseudomonas mendocina (Pseudomonas mendocina)).